The chain runs to 472 residues: Argininosuccinate lyase (472 aa).

It belongs to the lyase 1 family. Argininosuccinate lyase subfamily.

The protein resides in the cytoplasm. The enzyme catalyses 2-(N(omega)-L-arginino)succinate = fumarate + L-arginine. The protein operates within amino-acid biosynthesis; L-arginine biosynthesis; L-arginine from L-ornithine and carbamoyl phosphate: step 3/3. The chain is Argininosuccinate lyase from Synechococcus sp. (strain CC9605).